The sequence spans 460 residues: Serine/threonine-protein kinase UL13 (460 aa).

Positions 1–37 (MATRGRPGAKQVADHSVSDGGEQRRIPQKPPGPERCD) are disordered. Residues 12–25 (VADHSVSDGGEQRR) are compositionally biased toward basic and acidic residues. The region spanning 95–460 (LEPYRFLGRG…DVRRTVSALA (366 aa)) is the Protein kinase domain. ATP is bound by residues 101 to 109 (LGRGGYGSV) and lysine 120. The active-site Proton acceptor is the aspartate 219.

This sequence belongs to the protein kinase superfamily. Ser/Thr protein kinase family. Post-translationally, autophosphorylated.

The protein localises to the virion tegument. It is found in the host nucleus. The catalysed reaction is L-seryl-[protein] + ATP = O-phospho-L-seryl-[protein] + ADP + H(+). It carries out the reaction L-threonyl-[protein] + ATP = O-phospho-L-threonyl-[protein] + ADP + H(+). Multifunctional serine/threonine kinase that plays a role in several processes including egress of virus particles from the nucleus, modulation of the actin cytoskeleton and regulation of viral and cellular gene expression. Regulates the nuclear localization of viral envelopment factors UL34 and UL31 homologs, by phosphorylating the US3 kinase homolog, indicating a role in nuclear egress. Disrupts host nuclear lamins, including LMNA and LMNB1. Phosphorylates the viral Fc receptor composed of glycoproteins E (gE) and I (gI). Phosphorylation of glycoprotein E (gE) by UL13 homolog alters its subcellular localization, from the host early endosome to the plasma membrane. Participates in the transcriptional regulation of cellular and viral mRNAs mainly by phosphorylating the viral transcriptional regulator ICP22 homolog. The sequence is that of Serine/threonine-protein kinase UL13 (UL13) from Amazona oratrix (yellow-headed parrot).